The sequence spans 602 residues: Glutamine--fructose-6-phosphate aminotransferase [isomerizing] (602 aa).

Residue cysteine 2 is the Nucleophile; for GATase activity of the active site. The Glutamine amidotransferase type-2 domain occupies 2–217 (CGIVGVVGNT…DQELVIVKAD (216 aa)). Positions 67 to 87 (IGHTRWATHGKPTEDNAHPHR) are disordered. Residues 77 to 87 (KPTEDNAHPHR) show a composition bias toward basic and acidic residues. 2 SIS domains span residues 283–422 (IIKA…ANGN) and 455–592 (VREL…VDKP). The active-site For Fru-6P isomerization activity is the lysine 597.

As to quaternary structure, homodimer.

The protein localises to the cytoplasm. The catalysed reaction is D-fructose 6-phosphate + L-glutamine = D-glucosamine 6-phosphate + L-glutamate. Catalyzes the first step in hexosamine metabolism, converting fructose-6P into glucosamine-6P using glutamine as a nitrogen source. The sequence is that of Glutamine--fructose-6-phosphate aminotransferase [isomerizing] from Streptococcus pneumoniae (strain ATCC BAA-255 / R6).